The primary structure comprises 227 residues: MSSLYQKLSRRIGYFFADLGLLELALTHRSFGGKNNERLEFLGDSILNYVIAEDLFHRFPKAKEGELSRLRASLVKGDTLAELAREFELGDYLKLGAGELKSGGFRRDSILADTVEGIIGAMYLDAGMDVCRQHILAWYKERLDATSLKIVTKDAKTRLQEFLQARKHALPQYDVVNIVGEPHDQTFYVHCHIELCEEFIEGKGNSRRIAEQNAAAKALKKLEKKDV.

Residues 5–127 (YQKLSRRIGY…IIGAMYLDAG (123 aa)) form the RNase III domain. Glu-40 is a binding site for Mg(2+). Residue Asp-44 is part of the active site. 2 residues coordinate Mg(2+): Asp-113 and Glu-116. Residue Glu-116 is part of the active site. The region spanning 154–224 (DAKTRLQEFL…AAKALKKLEK (71 aa)) is the DRBM domain.

Belongs to the ribonuclease III family. Homodimer. Mg(2+) is required as a cofactor.

The protein resides in the cytoplasm. It catalyses the reaction Endonucleolytic cleavage to 5'-phosphomonoester.. Digests double-stranded RNA. Involved in the processing of primary rRNA transcript to yield the immediate precursors to the large and small rRNAs (23S and 16S). Processes some mRNAs, and tRNAs when they are encoded in the rRNA operon. Processes pre-crRNA and tracrRNA of type II CRISPR loci if present in the organism. The polypeptide is Ribonuclease 3 (Marinomonas sp. (strain MWYL1)).